The chain runs to 65 residues: UPF0434 protein Mmwyl1_2153 (65 aa).

This sequence belongs to the UPF0434 family.

The sequence is that of UPF0434 protein Mmwyl1_2153 from Marinomonas sp. (strain MWYL1).